The primary structure comprises 974 residues: Protein bicaudal C homolog 1 (974 aa).

The disordered stretch occupies residues methionine 1–arginine 50. Phosphoserine is present on residues serine 26, serine 31, and serine 43. KH domains follow at residues arginine 132–isoleucine 199 and proline 284–leucine 348. Lysine 398 bears the N6-acetyllysine mark. Serine 576, serine 612, and serine 679 each carry phosphoserine. Disordered stretches follow at residues valine 593 to lysine 644, glycine 665 to proline 719, and tyrosine 783 to glutamate 846. Residues serine 602–glutamate 619 show a composition bias toward polar residues. Residues leucine 690–glutamate 703 are compositionally biased toward basic and acidic residues. The SAM domain occupies phenylalanine 873 to asparagine 936.

Belongs to the BicC family. In terms of assembly, interacts (via KH domains) with ANKS6 (via SAM domain) in an RNA-dependent manner. Interacts with ANKS3.

It is found in the cytoplasm. Functionally, putative RNA-binding protein. Acts as a negative regulator of Wnt signaling. May be involved in regulating gene expression during embryonic development. This is Protein bicaudal C homolog 1 (BICC1) from Homo sapiens (Human).